Here is a 316-residue protein sequence, read N- to C-terminus: uncharacterized protein (316 aa).

The Cytoplasmic segment spans residues 1–70 (SFAYSGNSES…NNDEIGIWNY (70 aa)). A helical membrane pass occupies residues 71 to 91 (ISVAEMGGVLLFLSYWIWTCL). Position 92 (H92) is a topological domain, lumenal. Residues 93-113 (FSKIIFPAQKVICLYIFLFAL) form a helical membrane-spanning segment. Residues 114-170 (NQTLQECIEEYVFSSECIKYRQFYSVYEIIDFLRTNFYRLFVIYCALGFGITRTVPK) lie on the Cytoplasmic side of the membrane. The chain crosses the membrane as a helical span at residues 171 to 191 (YLMIKGISIVIALCSVYWISL). Topologically, residues 192–194 (YKD) are lumenal. Residues 195 to 215 (VYVVSEIFDMIQYEVSPAIWV) form a helical membrane-spanning segment. Residues 216–245 (YSICHLLKQCTSVTTYENASKARFFRRMLN) are Cytoplasmic-facing. The chain crosses the membrane as a helical span at residues 246–266 (AFIFIFCASPMLHYLSNIIFG). The Lumenal segment spans residues 267–316 (NFDYRLSVIIGDLFTFMEKIAFPCYIMFPTHNEALAYNRNVAEEAQEKMI).

It belongs to the UPF0742 family.

It localises to the endoplasmic reticulum. The protein resides in the membrane. This is an uncharacterized protein from Schizosaccharomyces pombe (strain 972 / ATCC 24843) (Fission yeast).